Here is a 387-residue protein sequence, read N- to C-terminus: Homoserine O-succinyltransferase (387 aa).

The 310-residue stretch at 45 to 354 folds into the AB hydrolase-1 domain; the sequence is NAVLVCHALN…DAPHGHDAFL (310 aa). Serine 151 functions as the Nucleophile in the catalytic mechanism. Arginine 221 is a binding site for substrate. Residues aspartate 317 and histidine 350 contribute to the active site. Aspartate 351 is a binding site for substrate.

The protein belongs to the AB hydrolase superfamily. MetX family. In terms of assembly, homodimer.

It localises to the cytoplasm. The enzyme catalyses L-homoserine + succinyl-CoA = O-succinyl-L-homoserine + CoA. It participates in amino-acid biosynthesis; L-methionine biosynthesis via de novo pathway; O-succinyl-L-homoserine from L-homoserine: step 1/1. In terms of biological role, transfers a succinyl group from succinyl-CoA to L-homoserine, forming succinyl-L-homoserine. The protein is Homoserine O-succinyltransferase of Methylibium petroleiphilum (strain ATCC BAA-1232 / LMG 22953 / PM1).